The chain runs to 96 residues: Prokineticin Bv8-like peptide 2 (96 aa).

Positions 1–19 (MKCFAQIVVLLLVIAFSHG) are cleaved as a signal peptide. Disulfide bonds link cysteine 26–cysteine 38, cysteine 32–cysteine 50, cysteine 37–cysteine 78, cysteine 60–cysteine 86, and cysteine 80–cysteine 95.

Belongs to the AVIT (prokineticin) family. Expressed by the skin glands.

It is found in the secreted. In terms of biological role, potent agonist for both PKR1/PROKR1 and PKR2/PROKR2, and inducer of a potent and long-lasting hyperalgesia. Also potentiates capsaicin-induced TRPV1 current when tested on DRG neurons. At subnanomolar concentrations, this protein both induces potent chemotaxis of macrophages and stimulates LPS-induced production of the pro-inflammatory cytokines IL-1 and IL-12. In vivo, potently stimulates the contraction of the guinea-pig gastrointestinal (GI) smooth muscle (nanomolar concentration) and rabbit aortic rings. The polypeptide is Prokineticin Bv8-like peptide 2 (Bombina maxima (Giant fire-bellied toad)).